Reading from the N-terminus, the 2845-residue chain is Adenomatous polyposis coli protein (2845 aa).

At A2 the chain carries N-acetylalanine. Residues 2–61 (AAASYDQLLKQVEALKMENSNLRQELEDNSNHLTKLETEASNMKEVLKQLQGSIEDETMT) adopt a coiled-coil conformation. 2 positions are modified to phosphoserine: S105 and S109. Positions 125 to 245 (SRESTGYLEE…QAAEAERSSQ (121 aa)) form a coiled coil. Residues 238-304 (AEAERSSQSR…THSAPRRLTS (67 aa)) are disordered. A compositionally biased stretch (basic and acidic residues) spans 239 to 263 (EAERSSQSRHDAASHEAGRQHEGHG). Over residues 266 to 279 (ESNTAASSSGQSPA) the composition is skewed to polar residues. 7 ARM repeats span residues 451-493 (LMKL…HYSV), 503-545 (LTNL…IASV), 546-589 (LRNL…VLSA), 590-636 (LWNL…GGGI), 637-681 (LRNV…ACGT), 682-723 (LWNL…SAAA), and 724-765 (LRNL…LDAQ). 3 positions are modified to phosphoserine: S742, S746, and S778. Residues 828–873 (VLPSSSSSRGSLDSSRSEKDRSLERERGIGLSAYHPTTENAGTSSK) form a disordered region. The segment covering 831–841 (SSSSSRGSLDS) has biased composition (low complexity). Over residues 842-855 (SRSEKDRSLERERG) the composition is skewed to basic and acidic residues. Positions 862–873 (HPTTENAGTSSK) are enriched in polar residues. A Phosphoserine modification is found at S906. Disordered regions lie at residues 921 to 942 (RRSS…ENSN) and 956 to 986 (RSSN…SYSE). The span at 927 to 942 (HTHSNTYNFTKSENSN) shows a compositional bias: polar residues. The span at 959 to 969 (NDSLNSVTSSD) shows a compositional bias: low complexity. 3 positions are modified to phosphoserine: S985, S1036, and S1040. The interaction with catenins stretch occupies residues 1018–1168 (ELDTPINYSL…TNYSIKYNEE (151 aa)). 4 disordered regions span residues 1058–1079 (IKQN…YSEN), 1092–1168 (GQQE…YNEE), 1189–1247 (SQKP…GTTC), and 1307–1375 (ENDV…PEHY). 2 stretches are compositionally biased toward polar residues: residues 1066–1078 (ARSQ…VYSE) and 1103–1128 (RGTS…QSLC). Over residues 1189–1204 (SQKPSFSFSKNSSAQS) the composition is skewed to low complexity. Polar residues predominate over residues 1211–1245 (SPSSENTAVPPSNAKRQNQLRPSSAQRNGQTQKGT). Residues 1354–1365 (SSGAKSPSKSGA) are compositionally biased toward low complexity. 5 positions are modified to phosphoserine: S1359, S1370, S1384, S1391, and S1394. 5 disordered regions span residues 1400-1474 (IASS…VNAA), 1525-1568 (PPVQ…SDDD), 1587-1606 (RKAK…VARK), 1746-2010 (DQVQ…APKS), and 2042-2069 (ISSA…KVGG). T1437 is subject to Phosphothreonine. Basic and acidic residues predominate over residues 1447-1465 (AKREVPKSKVPAAEKRESG). Positions 1532–1546 (NGNETESEQPEESNE) are enriched in acidic residues. Over residues 1547 to 1562 (NQDKEVEKPDSEKDLL) the composition is skewed to basic and acidic residues. Position 1565 is a phosphoserine (S1565). Over residues 1747–1762 (QVQQASSTSSGANKNQ) the composition is skewed to polar residues. S1772 bears the Phosphoserine mark. Positions 1783–1792 (YRTRVRKNTD) are enriched in basic and acidic residues. Residues S1859, S1861, and S1862 each carry the phosphoserine modification. The segment at 1864–1891 (DFDDDDVDLSREKAELRKGKESKDSEAK) is highly charged. Basic and acidic residues predominate over residues 1871–1894 (DLSREKAELRKGKESKDSEAKVTC). Positions 1900–1911 (SSQQAASKSQAS) are enriched in low complexity. Positions 1927–1936 (KQPTFPQSSK) are enriched in polar residues. Residues 1937–1949 (DGPDRGAATDEKL) show a composition bias toward basic and acidic residues. Phosphoserine is present on residues S1969 and S1971. Residues 1979–1990 (NNKESEPIKEAE) show a composition bias toward basic and acidic residues. The segment at 2034–2058 (EDDLLQECISSAMPKKKRPSRLKSE) is interaction with AXIN1. Phosphoserine is present on residues S2087, S2092, S2125, S2129, S2130, and S2132. 3 disordered regions span residues 2146–2190 (SPFH…GIKG), 2202–2652 (KIRS…PPVS), and 2664–2845 (CPIN…VTSV). T2151 bears the Phosphothreonine mark. The basic region stretch occupies residues 2167–2674 (ILKPGEKSTL…PINNPRSGRS (508 aa)). Basic and acidic residues predominate over residues 2169-2187 (KPGEKSTLEAKKIESENKG). Polar residues-rich tracts occupy residues 2203-2223 (IRSN…NMPS) and 2257-2272 (ASKS…TSPR). Phosphoserine occurs at positions 2260, 2270, and 2283. Over residues 2290-2311 (SQISGSNKGSSRSGSRDSTPSR) the composition is skewed to low complexity. The span at 2312-2331 (PTQQPLSRPMQSPGRNSISP) shows a compositional bias: polar residues. Positions 2348 to 2369 (TSSPSTASTKSSGSGKMSYTSP) are enriched in low complexity. The span at 2370-2411 (GRQLSQQNLTKQASLSKNASSIPRSESASKGLNQMSNGNGSN) shows a compositional bias: polar residues. 2 stretches are compositionally biased toward low complexity: residues 2417-2429 (SRMS…GSES) and 2459-2477 (SASF…PTRS). S2473 and S2535 each carry phosphoserine. Residues 2475–2845 (TRSQAQTPVL…HSGSYLVTSV (371 aa)) form an interaction with DLG1 region. Residues 2518-2535 (NDGRPTKRHDIARSHSES) show a composition bias toward basic and acidic residues. Polar residues predominate over residues 2555–2568 (SSSLPRVSTWRRTG). The residue at position 2569 (S2569) is a Phosphoserine. The span at 2569 to 2579 (SSSSILSASSE) shows a compositional bias: low complexity. Over residues 2580–2592 (SSEKAKSEDERHV) the composition is skewed to basic and acidic residues. Low complexity predominate over residues 2626-2638 (ASQSASSGAASGA). The span at 2668 to 2679 (NPRSGRSPTGNT) shows a compositional bias: polar residues. Phosphoserine is present on residues S2671 and S2674. Residues 2674–2845 (SPTGNTPPVI…HSGSYLVTSV (172 aa)) are interaction with MAPRE1. T2679 is subject to Phosphothreonine. Residues 2684-2694 (DSVSEKGSSSI) are compositionally biased toward low complexity. The span at 2695 to 2705 (KDSKDSKDTHG) shows a compositional bias: basic and acidic residues. The span at 2706–2716 (KQSVGSGSPVQ) shows a compositional bias: polar residues. S2713 and S2726 each carry phosphoserine. Positions 2765 to 2776 (SSSSSSKHSSPS) are enriched in low complexity. The span at 2786–2814 (FNYNPSPRKSSADSTSARPSQIPTPVSTN) shows a compositional bias: polar residues. S2791 carries the phosphoserine modification. The Microtubule tip localization signal motif lies at 2805–2808 (SQIP). The PDZ-binding signature appears at 2843–2845 (TSV).

Belongs to the adenomatous polyposis coli (APC) family. Forms homooligomers. Found in a complex consisting of ARHGEF4, APC and CTNNB1. Found in a complex composed of MACF1, APC, AXIN1, CTNNB1 and GSK3B. The complex composed, at least, of APC, CTNNB1 and GSK3B interacts with JPT1; the interaction requires the inactive form of GSK3B (phosphorylated at 'Ser-9'). Interacts with APC2. Interacts with DLG1 (via PDZ domains) and DLG3 (via PDZ domains). Interacts with alpha- and beta-catenins. Interacts with AXIN1 (via RGS domain). Interacts with ARHGEF4 (via N-terminus). Interacts (via C-terminal residues 2674-2843) with MAPRE1 (via C-terminal residues 206-211); the interaction inhibits association with and bundling of F-actin. Interacts with MAPRE2 and MAPRE3 (via C-terminus). Interacts with DIAPH1; DIAPH1 acts as a scaffold protein for MAPRE1 and APC to stabilize microtubules and promote cell migration. Interacts with DIAPH2. Interacts with SCRIB; may mediate targeting to adherens junctions of epithelial cells. Interacts with SPATA13 (via N-terminus and SH3 domain). Interacts with ASAP1 (via SH3 domain). Interacts (at the cell membrane) with AMER1 and AMER2 (via ARM repeats). Interacts with KHDRBS1. Interacts with actin; binds both to F-actin and actin filament bundles. In terms of processing, phosphorylated; phosphorylation enhances the F-actin bundling activity. Phosphorylated by GSK3B. Post-translationally, ubiquitinated, leading to its degradation by the proteasome. Ubiquitination is facilitated by Axin. Deubiquitinated by ZRANB1/TRABID. As to expression, expressed in liver, spleen, kidney, heart, lung, brain, stomach, intestine, testis and ovary.

Its subcellular location is the cell junction. The protein resides in the adherens junction. It localises to the cytoplasm. The protein localises to the cytoskeleton. It is found in the cell projection. Its subcellular location is the lamellipodium. The protein resides in the ruffle membrane. It localises to the cell membrane. Functionally, tumor suppressor. Promotes rapid degradation of CTNNB1 and participates in Wnt signaling as a negative regulator. APC activity is correlated with its phosphorylation state. Activates the GEF activity of SPATA13 and ARHGEF4. Plays a role in hepatocyte growth factor (HGF)-induced cell migration. Required for MMP9 up-regulation via the JNK signaling pathway in colorectal tumor cells. Associates with both microtubules and actin filaments, components of the cytoskeleton. Plays a role in mediating the organization of F-actin into ordered bundles. Functions downstream of Rho GTPases and DIAPH1 to selectively stabilize microtubules. Acts as a mediator of ERBB2-dependent stabilization of microtubules at the cell cortex. It is required for the localization of MACF1 to the cell membrane and this localization of MACF1 is critical for its function in microtubule stabilization. The sequence is that of Adenomatous polyposis coli protein (Apc) from Mus musculus (Mouse).